Here is a 187-residue protein sequence, read N- to C-terminus: ADP-ribosylation factor-like protein 9 (187 aa).

GTP is bound by residues Gly25–Thr32, Glu69–Ser73, and Asn126–Asp129.

The protein belongs to the small GTPase superfamily. Arf family.

This is ADP-ribosylation factor-like protein 9 (ARL9) from Homo sapiens (Human).